Consider the following 55-residue polypeptide: Small ribosomal subunit protein bS21 (55 aa).

The protein belongs to the bacterial ribosomal protein bS21 family.

The protein is Small ribosomal subunit protein bS21 of Phytoplasma mali (strain AT).